The chain runs to 405 residues: Sarcosine oxidase subunit beta (405 aa).

Positions 31, 32, 53, 61, 62, 66, and 68 each coordinate FAD. H173 is modified (tele-8alpha-FMN histidine). Residues V197, G354, G357, and K359 each coordinate FAD.

Belongs to the SoxB family. In terms of assembly, heterotetramer composed of subunits alpha (SoxA), beta (SoxB), gamma (SoxG) and delta (SoxD). The cofactor is FAD. Requires FMN as cofactor.

It is found in the cytoplasm. It catalyses the reaction sarcosine + (6S)-5,6,7,8-tetrahydrofolate + O2 = (6R)-5,10-methylene-5,6,7,8-tetrahydrofolate + glycine + H2O2. The enzyme catalyses sarcosine + O2 + H2O = formaldehyde + glycine + H2O2. In terms of biological role, in the presence of tetrahydrofolate, catalyzes the oxidative demethylation of sarcosine to yield glycine, 5,10-methylenetetrahydrofolate and hydrogen peroxide. In the absence of tetrahydrofolate, catalyzes the oxidative demethylation of sarcosine to yield glycine, formaldehyde and hydrogen peroxide. This chain is Sarcosine oxidase subunit beta (soxB), found in Arthrobacter sp.